The primary structure comprises 352 residues: tRNA pseudouridine synthase D (352 aa).

Asp81 acts as the Nucleophile in catalysis. Residues 157-303 (GIPNYFGAQR…MSHERRILRL (147 aa)) form the TRUD domain.

Belongs to the pseudouridine synthase TruD family.

The catalysed reaction is uridine(13) in tRNA = pseudouridine(13) in tRNA. Functionally, responsible for synthesis of pseudouridine from uracil-13 in transfer RNAs. This is tRNA pseudouridine synthase D from Pseudomonas fluorescens (strain Pf0-1).